The sequence spans 147 residues: Globin, polymeric component P2 (147 aa).

In terms of domain architecture, Globin spans 2–146 (PLTADQVAAL…ISDALVAGLE (145 aa)). Heme b is bound at residue H96.

Belongs to the globin family. As to quaternary structure, polymer.

The polypeptide is Globin, polymeric component P2 (Glycera dibranchiata (Bloodworm)).